A 490-amino-acid chain; its full sequence is Trigger factor (490 aa).

Residues 161–247 (GDQVIVDIEA…VHEVKEAELP (87 aa)) form the PPIase FKBP-type domain. The span at 441 to 460 (AEPAEGTEPAAEEAVTAPEV) shows a compositional bias: low complexity. Residues 441-490 (AEPAEGTEPAAEEAVTAPEVVDGETTPASESAESLAVTETGSRADDDQAS) form a disordered region. A compositionally biased stretch (polar residues) spans 466–481 (TPASESAESLAVTETG).

This sequence belongs to the FKBP-type PPIase family. Tig subfamily.

Its subcellular location is the cytoplasm. It catalyses the reaction [protein]-peptidylproline (omega=180) = [protein]-peptidylproline (omega=0). Functionally, involved in protein export. Acts as a chaperone by maintaining the newly synthesized protein in an open conformation. Functions as a peptidyl-prolyl cis-trans isomerase. The polypeptide is Trigger factor (Thermomicrobium roseum (strain ATCC 27502 / DSM 5159 / P-2)).